The sequence spans 308 residues: Olfactory receptor 4E2 (308 aa).

The Extracellular segment spans residues 1-24 (MGALNQTRVTEFIFLGLTDNWVLE). The N-linked (GlcNAc...) asparagine glycan is linked to Asn5. A helical membrane pass occupies residues 25–45 (ILFFVPFTVTYMLTLLGNFLI). Residues 46–57 (VVTIVFTPRLHN) are Cytoplasmic-facing. The helical transmembrane segment at 58 to 78 (PMYFFLSNLSFIDICHSSVTV) threads the bilayer. Residues 79-97 (PKMLEGLLLERKTISFDNC) are Extracellular-facing. A disulfide bridge links Cys97 with Cys179. The chain crosses the membrane as a helical span at residues 98–118 (IAQLFFLHLFACSEIFLLTIM). Residues His105 and Cys109 each contribute to the Cu cation site. At 119-143 (AYDRYVAICIPLHYSNVMNMKVCVQ) the chain is on the cytoplasmic side. A helical membrane pass occupies residues 144-164 (LVFALWLGGTIHSLVQTFLTI). The Extracellular segment spans residues 165 to 204 (RLPYCGPNIIDSYFCDVPPVIKLACTDTYLTGILIVSNSG). Residues 205–225 (TISLVCFLALVTSYTVILFSL) form a helical membrane-spanning segment. Over 226–236 (RKQSAEGRRKA) the chain is Cytoplasmic. The chain crosses the membrane as a helical span at residues 237 to 257 (LSTCSAHFMVVALFFGPCIFL). Residues 258–268 (YTRPDSSFSID) are Extracellular-facing. Residue Arg260 coordinates Cu cation. A helical transmembrane segment spans residues 269 to 289 (KVVSVFYTVVTPLLNPLIYTL). Over 290–308 (RNEEVKTAMKHLRQRRICS) the chain is Cytoplasmic.

This sequence belongs to the G-protein coupled receptor 1 family. In terms of tissue distribution, expressed in olfactory epithelium, specifically in the olfactory sensory neurons of the septal organ.

It localises to the cell membrane. Copper binding enhances receptor activity in response to odorant binding. Its function is as follows. Olfactory receptor that is activated by the binding of organosulfur odorants with thioether groups such as (methylthio)methanethiol (MTMT) and bis(methylthiomethyl) disulfide. Also binds odorants cis-cyclooctene and tert-butyl mercaptan. The activity of this receptor is mediated by G proteins which activate adenylyl cyclase (Potential). The protein is Olfactory receptor 4E2 of Mus musculus (Mouse).